The chain runs to 151 residues: Transcriptional regulator MraZ (151 aa).

2 consecutive SpoVT-AbrB domains span residues 5 to 51 (AHEL…PVAE) and 81 to 124 (AEIL…GREQ).

Belongs to the MraZ family. As to quaternary structure, forms oligomers.

It is found in the cytoplasm. Its subcellular location is the nucleoid. The protein is Transcriptional regulator MraZ of Neisseria gonorrhoeae (strain ATCC 700825 / FA 1090).